We begin with the raw amino-acid sequence, 549 residues long: Guanine nucleotide-binding protein-like 3 (549 aa).

A compositionally biased stretch (basic residues) spans 1-45 (MKRPKLKKASKRMTCHKRYKIQKKVREHHRKLRKEAKKRGHKKPR). Disordered regions lie at residues 1–56 (MKRP…SAPF) and 73–104 (ELKQ…SNVE). A basic region spans residues 2–46 (KRPKLKKASKRMTCHKRYKIQKKVREHHRKLRKEAKKRGHKKPRK). The stretch at 56–95 (FKEALLREAELRKQRLEELKQQQKLDRQKELEKKRKLETN) forms a coiled coil. Residues 73-96 (ELKQQQKLDRQKELEKKRKLETNP) show a composition bias toward basic and acidic residues. Lys-79 carries the N6-acetyllysine modification. Glycyl lysine isopeptide (Lys-Gly) (interchain with G-Cter in SUMO2) cross-links involve residues Lys-91 and Lys-99. Ser-101 is subject to Phosphoserine. Glycyl lysine isopeptide (Lys-Gly) (interchain with G-Cter in SUMO2) cross-links involve residues Lys-114, Lys-179, Lys-196, Lys-253, Lys-267, and Lys-275. In terms of domain architecture, CP-type G spans 131-312 (CQELKKVIEA…IIDSPSFIVS (182 aa)). Position 178-181 (178-181 (NKSD)) interacts with GTP. 261–268 (GFPNVGKS) contributes to the GTP binding site. Positions 282 to 456 (VGVSMGLTRS…HLANSILFQS (175 aa)) are intermediate. Residue 305–308 (DSPS) coordinates GTP. The acidic stretch occupies residues 465–543 (EEKDIHEELP…KIIEEDDAYD (79 aa)). The segment covering 474–483 (PKRKERKQEE) has biased composition (basic and acidic residues). The disordered stretch occupies residues 474-532 (PKRKERKQEEREDDKDSDQETVDEEVDENSSGMFAAEETGEALSEETTAGEQSTRSFIL). Over residues 484–501 (REDDKDSDQETVDEEVDE) the composition is skewed to acidic residues. Phosphoserine occurs at positions 490, 504, 517, and 529. A compositionally biased stretch (polar residues) spans 518–529 (EETTAGEQSTRS).

The protein belongs to the TRAFAC class YlqF/YawG GTPase family. In terms of assembly, interacts with MDM2; this interaction stabilizes MDM2. Interaction with MDM2 occurs in the nucleoplasm and is triggered by a nucleolar release mechanism, such as mitosis-induced nucleolar disassembly. Indirectly interacts with TP53, via MDM2-binding. Interacts with TSC22D1 isoform 2. As to expression, increased levels in lung tissue in cancer patients.

It localises to the nucleus. The protein resides in the nucleolus. In terms of biological role, may be required to maintain the proliferative capacity of stem cells. Stabilizes MDM2 by preventing its ubiquitination, and hence proteasomal degradation. This chain is Guanine nucleotide-binding protein-like 3 (GNL3), found in Homo sapiens (Human).